Consider the following 1043-residue polypeptide: Sarcoplasmic/endoplasmic reticulum calcium ATPase 2 (1043 aa).

At 1 to 48 (MENAHTKTVEEVLGHFGVNESTGLSLEQVKKLKERWGSNELPAEEGKT) the chain is on the cytoplasmic side. At Ser-38 the chain carries Phosphoserine. The chain crosses the membrane as a helical span at residues 49 to 69 (LLELVIEQFEDLLVRILLLAA). Over 70–89 (CISFVLAWFEEGEETITAFV) the chain is Lumenal. A helical transmembrane segment spans residues 90–110 (EPFVILLILVANAIVGVWQER). The Cytoplasmic portion of the chain corresponds to 111 to 253 (NAENAIEALK…QERTPLQQKL (143 aa)). The chain crosses the membrane as a helical span at residues 254–273 (DEFGEQLSKVISLICIAVWI). Residues 274–295 (INIGHFNDPVHGGSWIRGAIYY) lie on the Lumenal side of the membrane. 2 positions are modified to 3'-nitrotyrosine: Tyr-294 and Tyr-295. A helical membrane pass occupies residues 296–313 (FKIAVALAVAAIPEGLPA). Residues Val-304, Ala-305, Ile-307, and Glu-309 each coordinate Ca(2+). The Cytoplasmic portion of the chain corresponds to 314 to 756 (VITTCLALGT…EEGRAIYNNM (443 aa)). The active-site 4-aspartylphosphate intermediate is Asp-351. Asp-351 and Thr-353 together coordinate Mg(2+). Thr-353 serves as a coordination point for ATP. Thr-441 carries the post-translational modification Phosphothreonine. Residues Glu-442, Arg-489, and Lys-514 each contribute to the ATP site. Residue Ser-531 is modified to Phosphoserine. Residue Arg-559 coordinates ATP. The tract at residues 575–594 (MHLEDSANFIKYETNLTFVG) is interaction with HAX1. A Phosphoserine modification is found at Ser-580. Residues Thr-624, Gly-625, and Asp-626 each coordinate ATP. Phosphoserine occurs at positions 661 and 663. Residues Arg-677 and Lys-683 each coordinate ATP. Asp-702 serves as a coordination point for Mg(2+). Residue Asn-705 participates in ATP binding. The chain crosses the membrane as a helical span at residues 757-776 (KQFIRYLISSNVGEVVCIFL). Ca(2+) contacts are provided by Asn-767 and Glu-770. Residues 777 to 786 (TAALGFPEAL) are Lumenal-facing. Residues 787–807 (IPVQLLWVNLVTDGLPATALG) traverse the membrane as a helical segment. The interval 787–807 (IPVQLLWVNLVTDGLPATALG) is interaction with PLN. Positions 788–1043 (PVQLLWVNLV…DTNFSDMFWS (256 aa)) are interaction with TMEM64 and PDIA3. Ca(2+) contacts are provided by Asn-795, Thr-798, and Asp-799. At 808–827 (FNPPDLDIMNKPPRNPKEPL) the chain is on the cytoplasmic side. Residues 828–850 (ISGWLFFRYLAIGCYVGAATVGA) traverse the membrane as a helical segment. Residues 851–896 (AAWWFIAADGGPRVSFYQLSHFLQCKEDNPDFEGVDCAIFESPYPM) are Lumenal-facing. Cys-875 and Cys-887 are disulfide-bonded. Residues 897–916 (TMALSVLVTIEMCNALNSLS) form a helical membrane-spanning segment. Glu-907 is a Ca(2+) binding site. Residues 917-929 (ENQSLLRMPPWEN) lie on the Cytoplasmic side of the membrane. A helical transmembrane segment spans residues 930–948 (IWLVGSICLSMSLHFLILY). The interaction with PLN stretch occupies residues 931–942 (WLVGSICLSMSL). Topologically, residues 949–963 (VEPLPLIFQITPLNL) are lumenal. Residues 964–984 (TQWLMVLKISLPVILMDETLK) traverse the membrane as a helical segment. At 985 to 1043 (FVARNYLEPGKECAQPATKPSCSLSACTDGISWPFVLLIMPLVVWVYSTDTNFSDMFWS) the chain is on the cytoplasmic side.

Belongs to the cation transport ATPase (P-type) (TC 3.A.3) family. Type IIA subfamily. Interacts with sarcolipin (SLN); the interaction inhibits ATP2A2 Ca(2+) affinity. Interacts with phospholamban (PLN); the interaction inhibits ATP2A2 Ca(2+) affinity. Interacts with myoregulin (MRLN). Interacts with ARLN and ERLN; the interactions inhibit ATP2A2 Ca(2+) affinity. Interacts with STRIT1/DWORF; the interaction results in activation of ATP2A2. Interacts with the monomeric forms of SLN, PLN, ARLN, ERLN and STRI1/DWORF. Interacts with HAX1. Interacts with S100A8 and S100A9. Interacts with SLC35G1 and STIM1. Interacts with TMEM203. Interacts with TMEM64 and PDIA3. Interacts with TMX1. Interacts with TMX2. Interacts with VMP1; VMP1 competes with PLN and SLN to prevent them from forming an inhibitory complex with ATP2A2. Interacts with ULK1. Interacts with S100A1 in a Ca(2+)-dependent manner. Interacts with TUNAR. Interacts with FLVCR2; this interaction occurs in the absence of heme and promotes ATP2A2 proteasomal degradation; this complex is dissociated upon heme binding. Interacts with FNIP1. As to quaternary structure, interacts with TRAM2 (via C-terminus). Requires Mg(2+) as cofactor. Nitrated under oxidative stress. Nitration on the two tyrosine residues inhibits catalytic activity. In terms of processing, serotonylated on Gln residues by TGM2 in response to hypoxia, leading to its inactivation. In terms of tissue distribution, isoform 2 is highly expressed in heart and slow twitch skeletal muscle. Isoform 1 is widely expressed.

It is found in the endoplasmic reticulum membrane. Its subcellular location is the sarcoplasmic reticulum membrane. The catalysed reaction is Ca(2+)(in) + ATP + H2O = Ca(2+)(out) + ADP + phosphate + H(+). Has different conformational states with differential Ca2+ affinity. The E1 conformational state (active form) shows high Ca(2+) affinity, while the E2 state exhibits low Ca(2+) affinity. Binding of ATP allosterically increases its affinity for subsequent binding of Ca2+. Reversibly inhibited by phospholamban (PLN) at low calcium concentrations. PLN inhibits ATP2A2 Ca(2+) affinity by disrupting its allosteric activation by ATP. Inhibited by sarcolipin (SLN) and myoregulin (MRLN). The inhibition is blocked by VMP1. Enhanced by STRIT1/DWORF; STRIT1 increases activity by displacing sarcolipin (SLN), phospholamban (PLN) and myoregulin (MRLN). Stabilizes SERCA2 in its E2 state. In terms of biological role, this magnesium-dependent enzyme catalyzes the hydrolysis of ATP coupled with the translocation of calcium from the cytosol to the sarcoplasmic reticulum lumen. Involved in autophagy in response to starvation. Upon interaction with VMP1 and activation, controls ER-isolation membrane contacts for autophagosome formation. Also modulates ER contacts with lipid droplets, mitochondria and endosomes. In coordination with FLVCR2 mediates heme-stimulated switching from mitochondrial ATP synthesis to thermogenesis. Functionally, involved in the regulation of the contraction/relaxation cycle. Acts as a regulator of TNFSF11-mediated Ca(2+) signaling pathways via its interaction with TMEM64 which is critical for the TNFSF11-induced CREB1 activation and mitochondrial ROS generation necessary for proper osteoclast generation. Association between TMEM64 and SERCA2 in the ER leads to cytosolic Ca(2+) spiking for activation of NFATC1 and production of mitochondrial ROS, thereby triggering Ca(2+) signaling cascades that promote osteoclast differentiation and activation. The chain is Sarcoplasmic/endoplasmic reticulum calcium ATPase 2 (Atp2a2) from Rattus norvegicus (Rat).